A 272-amino-acid chain; its full sequence is MDSAFANLDAAGFLQIWQHFDADDNGYIEGKELDDFFRHMLKKLQPKDKITDERVQQIKKSFMSAYDATFDGRLQIEELANMILPQEENFLLIFRREAPLDNSVEFMKIWRKYDADSSGYISAAELKNFLKDLFLQHKKKIPPNKLDEYTDAMMKIFDKNKDGRLDLNDLARILALQENFLLQFKMDASSQVERKRDFEKIFAHYDVSRTGALEGPEVDGFVKDMMELVRPSISGGDLDKFRECLLTHCDMNKDGKIQKSELALCLGLKHKP.

EF-hand domains follow at residues 8–43, 53–89, 101–136, 145–180, 193–228, and 237–272; these read LDAA…MLKK, ERVQ…QEEN, DNSV…LFLQ, KLDE…QENF, ERKR…MMEL, and DLDK…KHKP. Ca(2+) contacts are provided by D21, D23, N25, Y27, and E32. Positions 114, 116, 118, 120, 125, 158, 160, 162, 164, 169, 206, 208, 210, 217, 250, 252, 254, 256, and 261 each coordinate Ca(2+).

The protein resides in the cytoplasm. The chain is Secretagogin (scgn) from Danio rerio (Zebrafish).